Consider the following 400-residue polypeptide: Pyruvate dehydrogenase E1 component subunit beta-4, chloroplastic (400 aa).

Positions Met1–Arg34 are disordered. Residues Met1–Arg57 constitute a chloroplast transit peptide. The segment covering Ala9–Arg34 has biased composition (low complexity). Glu136 lines the thiamine diphosphate pocket. K(+)-binding residues include Ile189, Ala237, Ile238, and Asn242.

In terms of assembly, tetramer of 2 alpha and 2 beta subunits. Thiamine diphosphate serves as cofactor.

The protein resides in the plastid. The protein localises to the chloroplast. It catalyses the reaction N(6)-[(R)-lipoyl]-L-lysyl-[protein] + pyruvate + H(+) = N(6)-[(R)-S(8)-acetyldihydrolipoyl]-L-lysyl-[protein] + CO2. Its function is as follows. The pyruvate dehydrogenase complex catalyzes the overall conversion of pyruvate to acetyl-CoA and CO(2). It contains multiple copies of three enzymatic components: pyruvate dehydrogenase (E1), dihydrolipoamide acetyltransferase (E2) and lipoamide dehydrogenase (E3). This chain is Pyruvate dehydrogenase E1 component subunit beta-4, chloroplastic, found in Oryza sativa subsp. japonica (Rice).